We begin with the raw amino-acid sequence, 286 residues long: Polyamine aminopropyltransferase (286 aa).

A PABS domain is found at 2-237 (DLWFSEVHTP…GYWLFGFASK (236 aa)). Q31 is a binding site for S-methyl-5'-thioadenosine. Spermidine is bound at residue D86. Residues E106 and 137–138 (NG) each bind S-methyl-5'-thioadenosine. D155 (proton acceptor) is an active-site residue.

It belongs to the spermidine/spermine synthase family. As to quaternary structure, homodimer or homotetramer.

The protein localises to the cytoplasm. It catalyses the reaction S-adenosyl 3-(methylsulfanyl)propylamine + putrescine = S-methyl-5'-thioadenosine + spermidine + H(+). The protein operates within amine and polyamine biosynthesis; spermidine biosynthesis; spermidine from putrescine: step 1/1. Functionally, catalyzes the irreversible transfer of a propylamine group from the amino donor S-adenosylmethioninamine (decarboxy-AdoMet) to putrescine (1,4-diaminobutane) to yield spermidine. The polypeptide is Polyamine aminopropyltransferase (Streptococcus pneumoniae serotype 4 (strain ATCC BAA-334 / TIGR4)).